The sequence spans 493 residues: MAKIMIQGTASSVGKSLIVAALCRIFKQDGYSVCPFKSQNMSLNSYITLDGKEMGRAQVLQAYAAGLEPEVYMNPILLKPTSDKKSQIIVNGKVYGNSTAMEYHNLKIKFKGMLKEQFKKLEEDFDIVVMEGAGSPAEINLRDRDIVNMGMAEIVDAPVLLVGDIDKGGVFASLAGTMLLLNEGEKERVKGTIINKFRGDVEILNPGLDMLEDIIHIPCLGVVPYTRLQLEDEDGAVEFNKKAYAPIDIAVIKMPHISNFTDLDALKSEEDVSIRFITSKEEFKEPDLLVIPGSKNTIEDLLYLRKCGLEESIKEYSKDGKIIGICGGYQVLGSKIKDPYKVETDLGEIEGLNLLDMETTFEKEKITTRVSAKLINEEIENIVYGYEIHMGISEYSENVKPLFKIYDKNGEKVDYFDGAINEKGNVMGTYIHGVFDGIVFREKIINELRVKKGLKKKKSQVYEHMREKELDKLADIVRQSLDMEKIYSIIGMK.

The region spanning 246-440 (PIDIAVIKMP…IHGVFDGIVF (195 aa)) is the GATase cobBQ-type domain. C326 (nucleophile) is an active-site residue. H432 is an active-site residue.

It belongs to the CobB/CobQ family. CobQ subfamily.

Its pathway is cofactor biosynthesis; adenosylcobalamin biosynthesis. Functionally, catalyzes amidations at positions B, D, E, and G on adenosylcobyrinic A,C-diamide. NH(2) groups are provided by glutamine, and one molecule of ATP is hydrogenolyzed for each amidation. The polypeptide is Cobyric acid synthase (Clostridium botulinum (strain 657 / Type Ba4)).